The primary structure comprises 335 residues: Cathepsin B (335 aa).

The signal sequence occupies residues 1–17; the sequence is MWRLLATLSCLLVLTSA. Residues 18–79 constitute a propeptide, activation peptide; that stretch reads RSSLYFPPLS…QRDAFAADVV (62 aa). Cystine bridges form between Cys93–Cys122, Cys105–Cys150, Cys141–Cys207, Cys142–Cys146, Cys179–Cys211, and Cys187–Cys198. Cys108 is an active-site residue. Residue Asn192 is glycosylated (N-linked (GlcNAc...) asparagine). Residue Lys220 is modified to N6-acetyllysine. Cys227 and Cys331 form a disulfide bridge. Catalysis depends on residues His278 and Asn298. Positions 333–335 are excised as a propeptide; that stretch reads HQY.

This sequence belongs to the peptidase C1 family. As to quaternary structure, dimer of a heavy chain and a light chain cross-linked by a disulfide bond. Interacts with SRPX2. Directly interacts with SHKBP1. In terms of tissue distribution, expressed in myoblasts, the myotube, fibroblasts and fetal muscle (at protein level). Expressed in the spleen (at protein level).

The protein resides in the lysosome. The protein localises to the melanosome. It localises to the secreted. Its subcellular location is the extracellular space. It is found in the apical cell membrane. It catalyses the reaction Hydrolysis of proteins with broad specificity for peptide bonds. Preferentially cleaves -Arg-Arg-|-Xaa bonds in small molecule substrates (thus differing from cathepsin L). In addition to being an endopeptidase, shows peptidyl-dipeptidase activity, liberating C-terminal dipeptides.. Its function is as follows. Thiol protease which is believed to participate in intracellular degradation and turnover of proteins. Cleaves matrix extracellular phosphoglycoprotein MEPE. Involved in the solubilization of cross-linked TG/thyroglobulin in the thyroid follicle lumen. Has also been implicated in tumor invasion and metastasis. In Bos taurus (Bovine), this protein is Cathepsin B (CTSB).